The following is an 814-amino-acid chain: Telomere repeats-binding bouquet formation protein 1 (814 aa).

ARM repeat units follow at residues 93 to 136 (EMFR…KTSR) and 327 to 368 (GGLP…GMST). Disordered stretches follow at residues 461 to 521 (DQDS…ELKR), 551 to 584 (STPT…LSDD), and 653 to 753 (FRRS…KRQN). A coiled-coil region spans residues 488–512 (EKSKKRKHKQKRENERSDNQETRRE). Basic and acidic residues-rich tracts occupy residues 499 to 521 (RENE…ELKR), 565 to 577 (IFRH…RNQR), and 679 to 688 (EHSTSAQEHK). The span at 689–699 (QKSKREKHKLS) shows a compositional bias: basic residues. Over residues 714-741 (RPRETYSPDVKQWTDHRHLKKSSEDARS) the composition is skewed to basic and acidic residues. One can recognise a Myb-like domain in the interval 746–799 (GRHRKRQNWSDKELCYLTKGVKRFGHSWNTILWKYPFHPGRTNVDLAKKFYHMQ).

Belongs to the TERB1 family. As to quaternary structure, component of the MAJIN-TERB1-TERB2 complex.

It localises to the chromosome. The protein resides in the telomere. Its subcellular location is the nucleus inner membrane. Its function is as follows. Meiosis-specific telomere-associated protein involved in meiotic telomere attachment to the nucleus inner membrane, a crucial step for homologous pairing and synapsis. Component of the MAJIN-TERB1-TERB2 complex, which promotes telomere cap exchange by mediating attachment of telomeric DNA to the inner nuclear membrane and replacement of the protective cap of telomeric chromosomes: in early meiosis, the MAJIN-TERB1-TERB2 complex associates with telomeric DNA and the shelterin/telosome complex. During prophase, the complex matures and promotes release of the shelterin/telosome complex from telomeric DNA. In the MAJIN-TERB1-TERB2 complex, TERB1 probably mediates association with the shelterin/telosome complex. This chain is Telomere repeats-binding bouquet formation protein 1 (ccdc79), found in Danio rerio (Zebrafish).